We begin with the raw amino-acid sequence, 473 residues long: GTPase Der (473 aa).

EngA-type G domains lie at 3–167 and 203–378; these read FTVA…GKDR and LRVA…RVWN. Residues 9 to 16, 56 to 60, 119 to 122, 209 to 216, 256 to 260, and 321 to 324 contribute to the GTP site; these read GRPNVGKS, DTAGL, NKSE, GRPNAGKS, DTAGM, and NKWD. The 85-residue stretch at 379–463 folds into the KH-like domain; the sequence is KRISTARLNR…PIRIHFRSPD (85 aa).

Belongs to the TRAFAC class TrmE-Era-EngA-EngB-Septin-like GTPase superfamily. EngA (Der) GTPase family. As to quaternary structure, associates with the 50S ribosomal subunit.

GTPase that plays an essential role in the late steps of ribosome biogenesis. The protein is GTPase Der of Rhizobium etli (strain ATCC 51251 / DSM 11541 / JCM 21823 / NBRC 15573 / CFN 42).